The following is a 313-amino-acid chain: Sorting nexin-20 (313 aa).

The tract at residues 1–61 (MASPQHPGGP…MTTRELQEHW (61 aa)) is disordered. Position 3 is a phosphoserine (serine 3). Over residues 29 to 38 (PPGPDLPCPG) the composition is skewed to pro residues. Residues 45–55 (GPTSNSNMTTR) show a composition bias toward polar residues. Residues 71–188 (VRLLFEIASA…DFLTRPELCE (118 aa)) form the PX domain. A 1,2-diacyl-sn-glycero-3-phospho-(1D-myo-inositol-3-phosphate)-binding residues include arginine 113, serine 115, lysine 140, and arginine 154.

The protein belongs to the sorting nexin family. Interacts with SELPLG. Interaction with SELPLG is controversial.

It localises to the early endosome membrane. It is found in the cell membrane. The protein resides in the cytoplasm. Its subcellular location is the nucleus. Its function is as follows. May play a role in cellular vesicle trafficking. Has been proposed to function as a sorting protein that targets SELPLG into endosomes, but has no effect on SELPLG internalization from the cell surface, or on SELPLG-mediated cell-cell adhesion. The sequence is that of Sorting nexin-20 (Snx20) from Rattus norvegicus (Rat).